Here is an 870-residue protein sequence, read N- to C-terminus: Radial spoke head 10 homolog B (870 aa).

A compositionally biased stretch (basic and acidic residues) spans 1–16; the sequence is MVKEKKKADKKGEKSA. The segment at 1–43 is disordered; it reads MVKEKKKADKKGEKSARSPSSLSDNLDFSKQDGNTTRQEMSPA. Over residues 17 to 39 the composition is skewed to polar residues; sequence RSPSSLSDNLDFSKQDGNTTRQE. MORN repeat units lie at residues 86-108, 109-131, 132-154, 155-177, 179-201, 204-226, 227-249, 251-273, 284-306, and 307-329; these read YEGE…GGCT, YRGM…DGLK, YEGD…DGSM, YEGE…TQPV, YIGH…QEGT, YEGD…SGNI, YEGQ…TTNE, YTGR…LKRI, YIGE…SGAM, and YDGE…NGRV. Residues 674–704 are disordered; that stretch reads NKSPSAVMSHESDAAHSDSARSSSSKLELSP. Positions 683-692 are enriched in basic and acidic residues; it reads HESDAAHSDS. A compositionally biased stretch (low complexity) spans 693-703; the sequence is ARSSSSKLELS. The stretch at 784 to 811 forms a coiled coil; sequence KEKIRADRLRSTAQAQQRKMEDDELEAR. Residues 840 to 870 are disordered; it reads VSSSHLILDPPKEDVTVSPSSKTITSKKKKK.

As to quaternary structure, interacts with RSPH6A. Does not appear to be part of the axonemal radial spoke complexes 1 or 2.

It is found in the cytoplasm. The protein resides in the cytoskeleton. Its subcellular location is the cilium axoneme. It localises to the cell projection. The protein localises to the cilium. It is found in the flagellum. In terms of biological role, may function as part of the axonemal radial spoke complex 3 (RS3). Radial spoke complexes are important for ciliary motility. This chain is Radial spoke head 10 homolog B (RSPH10B), found in Homo sapiens (Human).